The following is a 197-amino-acid chain: MAREKIVVAGGSTKSWKLLLGLRVFAFMATLAAAIVMSLNKETKTLVVATIGTLPIKATLTAKFQDTPAFVFFVIANVMVSFHNLLMIVLQIFSRKLEYKGVRLLSIAILDMLNATLVSAAANAAVFVAELGKNGNKHAKWNKVCDRFATYCDHGAGALIAAFAGVILMLLVSSVSISRLLINSKHLSTTATTTAVV.

At Ala-2 the chain carries N-acetylalanine. At 2–17 the chain is on the cytoplasmic side; sequence AREKIVVAGGSTKSWK. Residues 18 to 38 form a helical membrane-spanning segment; sequence LLLGLRVFAFMATLAAAIVMS. Residues 39–69 are Extracellular-facing; it reads LNKETKTLVVATIGTLPIKATLTAKFQDTPA. A helical membrane pass occupies residues 70–90; the sequence is FVFFVIANVMVSFHNLLMIVL. Residues 91–106 lie on the Cytoplasmic side of the membrane; the sequence is QIFSRKLEYKGVRLLS. Residues 107–127 traverse the membrane as a helical segment; sequence IAILDMLNATLVSAAANAAVF. The Extracellular segment spans residues 128–156; that stretch reads VAELGKNGNKHAKWNKVCDRFATYCDHGA. Residues 157–177 form a helical membrane-spanning segment; sequence GALIAAFAGVILMLLVSSVSI. The Cytoplasmic portion of the chain corresponds to 178-197; it reads SRLLINSKHLSTTATTTAVV.

The protein belongs to the Casparian strip membrane proteins (CASP) family. In terms of assembly, homodimer and heterodimers.

The protein resides in the cell membrane. The chain is CASP-like protein 1B2 from Arabidopsis lyrata subsp. lyrata (Lyre-leaved rock-cress).